The primary structure comprises 54 residues: uncharacterized protein (54 aa).

This is an uncharacterized protein from Bacillus subtilis (strain 168).